A 1464-amino-acid polypeptide reads, in one-letter code: MMSFVQSGTWFLLTLLHPTLILAQQSNVDELGCSHLGQSYESRDVWKPEPCQICVCDSGSVLCDDIICDEEPLDCPNPEIPFGECCAICPQPSTPAPVLPDGHGPQGPKGDPGPPGIPGRNGDPGLPGQPGLPGPPGSPGICESCPTGGQNYSPQFDSYDVKSGVGGMGGYPGPAGPPGPPGPPGSSGHPGSPGSPGYQGPPGEPGQAGPAGPPGPPGALGPAGPAGKDGESGRPGRPGERGLPGPPGIKGPAGMPGFPGMKGHRGFDGRNGEKGETGAPGLKGENGLPGDNGAPGPMGPRGAPGERGRPGLPGAAGARGNDGARGSDGQPGPPGPPGTAGFPGSPGAKGEVGPAGSPGSNGSPGQRGEPGPQGHAGAQGPPGPPGNNGSPGGKGEMGPAGIPGAPGLIGARGPPGPAGTNGIPGTRGPSGEPGKNGAKGEPGARGERGEAGSPGIPGPKGEDGKDGSPGEPGANGLPGAAGERGPSGFRGPAGPNGIPGEKGPPGERGGPGPAGPRGVAGEPGRDGTPGGPGIRGMPGSPGGPGNDGKPGPPGSQGESGRPGPPGPSGPRGQPGVMGFPGPKGNDGAPGKNGERGGPGGPGLPGPAGKNGETGPQGPPGPTGPAGDKGDSGPPGPQGLQGIPGTGGPPGENGKPGEPGPKGEVGAPGAPGGKGDSGAPGERGPPGTAGIPGARGGAGPPGPEGGKGPAGPPGPPGASGSPGLQGMPGERGGPGSPGPKGEKGEPGGAGADGVPGKDGPRGPAGPIGPPGPAGQPGDKGEGGSPGLPGIAGPRGGPGERGEHGPPGPAGFPGAPGQNGEPGAKGERGAPGEKGEGGPPGPAGPTGSSGPAGPPGPQGVKGERGSPGGPGTAGFPGGRGLPGPPGNNGNPGPPGPSGAPGKDGPPGPAGNSGSPGNPGIAGPKGDAGQPGEKGPPGAQGPPGSPGPLGIAGLTGARGLAGPPGMPGPRGSPGPQGIKGESGKPGASGHNGERGPPGPQGLPGQPGTAGEPGRDGNPGSDGQPGRDGSPGGKGDRGENGSPGAPGAPGHPGPPGPVGPSGKSGDRGETGPAGPSGAPGPAGARGAPGPQGPRGDKGETGERGSNGIKGHRGFPGNPGPPGSPGAAGHQGAIGSPGPAGPRGPVGPHGPPGKDGTSGHPGPIGPPGPRGNRGERGSEGSPGHPGQPGPPGPPGAPGPCCGGGAAAIAGVGGEKSGGFSPYYGDDPMDFKINTEEIMSSLKSVNGQIESLISPDGSRKNPARNCRDLKFCHPELKSGEYWVDPNQGCKMDAIKVFCNMETGETCINASPMTVPRKHWWTDSGAEKKHVWFGESMNGGFQFSYGPPDLPEDVVDVQLAFLRLLSSRASQNITYHCKNSIAYMDQASGNVKKSLKLMGSNEGEFKAEGNSKFTYTVLEDGCTKHTGEWSKTVFEYQTRKAMRLPIIDIAPYDIGGPDQEFGVDIGPVCFL.

Residues Met-1 to Ala-23 form the signal peptide. Positions Gln-24–Pro-154 are cleaved as a propeptide — N-terminal propeptide. One can recognise a VWFC domain in the interval Leu-31–Pro-90. Residues Pro-97 to Cys-1195 form a disordered region. The span at Pro-100 to Lys-109 shows a compositional bias: low complexity. Residues Thr-147–Phe-156 are compositionally biased toward polar residues. The tract at residues Gln-155 to Gly-169 is nonhelical region (N-terminal). Residues Gly-164–Gly-173 are compositionally biased toward gly residues. Residues Gly-170–Cys-1195 are triple-helical region. Over residues Pro-174–Pro-184 the composition is skewed to pro residues. The segment covering Ser-186–Tyr-198 has biased composition (low complexity). Residues Lys-228–Glu-240 are compositionally biased toward basic and acidic residues. Position 262 is a 5-hydroxylysine; alternate (Lys-262). The O-linked (Gal...) hydroxylysine; alternate glycan is linked to Lys-262. The span at Arg-265 to Glu-276 shows a compositional bias: basic and acidic residues. Lys-283 carries the 5-hydroxylysine modification. Composition is skewed to low complexity over residues Pro-310 to Asn-321 and Pro-354 to Gln-379. The segment covering Gly-389–Gly-398 has biased composition (gly residues). Low complexity predominate over residues Pro-399 to Arg-412. Residues Gly-527 to Gly-548 show a composition bias toward gly residues. Over residues Pro-606–Pro-615 the composition is skewed to low complexity. Composition is skewed to gly residues over residues Gly-641–Gly-650 and Gly-668–Gly-677. Residues Ala-678–Pro-691 show a composition bias toward low complexity. The segment covering Gly-692–Pro-708 has biased composition (gly residues). Residues Ala-717–Pro-727 show a composition bias toward low complexity. Positions Ala-822 to Glu-834 are enriched in basic and acidic residues. Lys-859 carries the post-translational modification 5-hydroxylysine. Residues Gly-863 to Leu-879 are compositionally biased toward gly residues. The span at Pro-889–Pro-906 shows a compositional bias: pro residues. Low complexity-rich tracts occupy residues Ala-907–Pro-934 and Pro-945–Pro-960. Lys-976 carries the 5-hydroxylysine modification. Residues Pro-1045–Val-1054 show a composition bias toward pro residues. Low complexity predominate over residues Pro-1068–Pro-1084. 5-hydroxylysine occurs at positions 1093 and 1105. Low complexity predominate over residues Pro-1120–Pro-1132. Pro residues predominate over residues Pro-1180–Pro-1192. Residues Asp-1220 to Leu-1464 constitute a propeptide, C-terminal propeptide. The Fibrillar collagen NC1 domain occupies Glu-1230–Leu-1464. Cystine bridges form between Cys-1260/Cys-1292, Cys-1300/Cys-1462, and Cys-1370/Cys-1415. Ca(2+) is bound by residues Asp-1278, Asn-1280, Gln-1281, Cys-1283, and Asp-1286.

It belongs to the fibrillar collagen family. Trimers of identical alpha 1(III) chains. The chains are linked to each other by interchain disulfide bonds. Trimers are also cross-linked via hydroxylysines. Interacts with ADGRG1. Proline residues at the third position of the tripeptide repeating unit (G-X-Y) are hydroxylated in some or all of the chains. Post-translationally, O-linked glycan consists of a Glc-Gal disaccharide bound to the oxygen atom of a post-translationally added hydroxyl group. Expressed in embryonic brain, specifically in the meninges, pial basement membrane and blood vessels (at protein level).

The protein resides in the secreted. It localises to the extracellular space. Its subcellular location is the extracellular matrix. In terms of biological role, collagen type III occurs in most soft connective tissues along with type I collagen. Involved in regulation of cortical development. Is the major ligand of ADGRG1 in the developing brain and binding to ADGRG1 inhibits neuronal migration and activates the RhoA pathway by coupling ADGRG1 to GNA13 and possibly GNA12. The protein is Collagen alpha-1(III) chain (Col3a1) of Mus musculus (Mouse).